The sequence spans 448 residues: Chaperone SurA (448 aa).

The signal sequence occupies residues 1 to 27 (MKKTLRFAAVASGLVASLITVAPSASA). 2 consecutive PpiC domains span residues 185 to 288 (QQDL…RLVE) and 301 to 399 (IVQT…QVLG).

The protein localises to the periplasm. It carries out the reaction [protein]-peptidylproline (omega=180) = [protein]-peptidylproline (omega=0). Its function is as follows. Chaperone involved in the correct folding and assembly of outer membrane proteins. Recognizes specific patterns of aromatic residues and the orientation of their side chains, which are found more frequently in integral outer membrane proteins. May act in both early periplasmic and late outer membrane-associated steps of protein maturation. In Burkholderia pseudomallei (strain 1710b), this protein is Chaperone SurA.